The chain runs to 221 residues: PKHD-type hydroxylase NATL1_16191 (221 aa).

In terms of domain architecture, Fe2OG dioxygenase spans 80 to 174 (LIHGVMFTQS…RHVCVGWIQS (95 aa)). Fe cation-binding residues include H98, D100, and H155. Position 165 (R165) interacts with 2-oxoglutarate.

The cofactor is Fe(2+). L-ascorbate serves as cofactor.

This is PKHD-type hydroxylase NATL1_16191 from Prochlorococcus marinus (strain NATL1A).